The chain runs to 148 residues: MDTPNKDDSIIRFSVSLQQNLLDELDNRIIKNGYSSRSELVRDMIREKLVEDNWAEDNPNDESKIAVLVVIYDHHQRELNQRMIDIQHASGTHVLCTTHIHMDAHNCLETIILQGNSSEIQRLQLEIGGLRGVKFAKLTKASSFECNE.

Residues H88, H99, H101, and C107 each coordinate Ni(2+).

The protein belongs to the transcriptional regulatory CopG/NikR family. The cofactor is Ni(2+).

Transcriptional regulator. This is Putative nickel-responsive regulator from Helicobacter pylori (strain Shi470).